The primary structure comprises 64 residues: DNA-directed RNA polymerase subunit Rpo10 (64 aa).

Residues Cys7, Cys10, Cys45, and Cys46 each coordinate Zn(2+).

Belongs to the archaeal Rpo10/eukaryotic RPB10 RNA polymerase subunit family. In terms of assembly, part of the RNA polymerase complex. Zn(2+) serves as cofactor.

The protein resides in the cytoplasm. The catalysed reaction is RNA(n) + a ribonucleoside 5'-triphosphate = RNA(n+1) + diphosphate. Functionally, DNA-dependent RNA polymerase (RNAP) catalyzes the transcription of DNA into RNA using the four ribonucleoside triphosphates as substrates. The polypeptide is DNA-directed RNA polymerase subunit Rpo10 (Halorubrum lacusprofundi (strain ATCC 49239 / DSM 5036 / JCM 8891 / ACAM 34)).